Consider the following 76-residue polypeptide: Envelope small membrane protein (76 aa).

Residues 1 to 14 are Virion surface-facing; it reads MLQLVNDNGLVVNV. Residues 15-35 traverse the membrane as a helical segment; that stretch reads ILWLFVLFFLLIISITFVQLV. The Intravirion portion of the chain corresponds to 36-76; the sequence is NLCFTCHRLCNSAVYTPIGRLYRVYKSYMRIDPLPSTVIDV.

Belongs to the alphacoronaviruses E protein family. As to quaternary structure, homopentamer. Interacts with membrane protein M in the budding compartment of the host cell, which is located between endoplasmic reticulum and the Golgi complex. Interacts with Nucleoprotein. Interacts with host IRF3; this interaction inhibits type I IFN production.

Its subcellular location is the host Golgi apparatus membrane. The protein resides in the host endoplasmic reticulum. In terms of biological role, plays a central role in virus morphogenesis and assembly. Acts as a viroporin and self-assembles in host membranes forming pentameric protein-lipid pores that allow ion transport. Also plays a role in the induction of apoptosis. Counteracts the production of type I interferon by interacting with host IRF3 component and preventing its translocation to the host nucleus. The protein is Envelope small membrane protein of Sus scrofa (Pig).